Here is a 154-residue protein sequence, read N- to C-terminus: D-aminoacyl-tRNA deacylase (154 aa).

A Gly-cisPro motif, important for rejection of L-amino acids motif is present at residues 138 to 139; the sequence is GP.

Belongs to the DTD family. As to quaternary structure, homodimer.

It is found in the cytoplasm. It carries out the reaction glycyl-tRNA(Ala) + H2O = tRNA(Ala) + glycine + H(+). The catalysed reaction is a D-aminoacyl-tRNA + H2O = a tRNA + a D-alpha-amino acid + H(+). In terms of biological role, an aminoacyl-tRNA editing enzyme that deacylates mischarged D-aminoacyl-tRNAs. Also deacylates mischarged glycyl-tRNA(Ala), protecting cells against glycine mischarging by AlaRS. Acts via tRNA-based rather than protein-based catalysis; rejects L-amino acids rather than detecting D-amino acids in the active site. By recycling D-aminoacyl-tRNA to D-amino acids and free tRNA molecules, this enzyme counteracts the toxicity associated with the formation of D-aminoacyl-tRNA entities in vivo and helps enforce protein L-homochirality. The polypeptide is D-aminoacyl-tRNA deacylase (Halorhodospira halophila (strain DSM 244 / SL1) (Ectothiorhodospira halophila (strain DSM 244 / SL1))).